We begin with the raw amino-acid sequence, 371 residues long: Putative glutamate--cysteine ligase 2 (371 aa).

The protein belongs to the glutamate--cysteine ligase type 2 family. YbdK subfamily.

It catalyses the reaction L-cysteine + L-glutamate + ATP = gamma-L-glutamyl-L-cysteine + ADP + phosphate + H(+). ATP-dependent carboxylate-amine ligase which exhibits weak glutamate--cysteine ligase activity. This chain is Putative glutamate--cysteine ligase 2, found in Burkholderia multivorans (strain ATCC 17616 / 249).